The chain runs to 160 residues: RxLR effector protein PexRD44 (160 aa).

An N-terminal signal peptide occupies residues 1–21; that stretch reads MRLLLWVLISMLSIALSSCAA. Residues 54-76 carry the RxLR-dEER motif; the sequence is RFLRGESSKIVNLKQEEGVFEER.

It belongs to the RxLR effector family.

The protein localises to the secreted. Its subcellular location is the host cell membrane. It is found in the host nucleus. The protein resides in the host nucleolus. Its function is as follows. Effector that is involved in host plant infection. Contributes to virulence during the early infection stage, by inhibiting plant defense responses induced by both PAMP-triggered immunity (PTI) and effector-triggered immunity (ETI). The chain is RxLR effector protein PexRD44 from Phytophthora infestans (strain T30-4) (Potato late blight agent).